Consider the following 510-residue polypeptide: NAD(P)H-quinone oxidoreductase subunit 2 B, chloroplastic (510 aa).

13 helical membrane passes run L24 to L44, I57 to F77, I99 to I119, M124 to C144, L149 to Y169, Y183 to G203, P227 to A247, W295 to I315, M323 to D343, Y354 to L374, A395 to F415, L418 to L438, and M484 to I504.

This sequence belongs to the complex I subunit 2 family. NDH is composed of at least 16 different subunits, 5 of which are encoded in the nucleus.

Its subcellular location is the plastid. The protein resides in the chloroplast thylakoid membrane. The catalysed reaction is a plastoquinone + NADH + (n+1) H(+)(in) = a plastoquinol + NAD(+) + n H(+)(out). The enzyme catalyses a plastoquinone + NADPH + (n+1) H(+)(in) = a plastoquinol + NADP(+) + n H(+)(out). Its function is as follows. NDH shuttles electrons from NAD(P)H:plastoquinone, via FMN and iron-sulfur (Fe-S) centers, to quinones in the photosynthetic chain and possibly in a chloroplast respiratory chain. The immediate electron acceptor for the enzyme in this species is believed to be plastoquinone. Couples the redox reaction to proton translocation, and thus conserves the redox energy in a proton gradient. The chain is NAD(P)H-quinone oxidoreductase subunit 2 B, chloroplastic from Lactuca sativa (Garden lettuce).